Here is a 927-residue protein sequence, read N- to C-terminus: Autophagy-related protein 18h (927 aa).

Disordered stretches follow at residues 1 to 25 (MKSN…NGTN) and 333 to 353 (DGPG…VGSH). Residues 335–344 (PGPSLSSSPG) are compositionally biased toward low complexity. WD repeat units lie at residues 379–419 (AHTS…TKNG) and 441–482 (MTSA…NVLE). 2 disordered regions span residues 750–788 (NRGF…EERR) and 844–927 (IENS…SEEG). Residues 846–859 (NSSGISGDSNVSSN) show a composition bias toward low complexity. Residues 896-907 (ETEHKDAPSDGK) are compositionally biased toward basic and acidic residues.

It belongs to the WD repeat PROPPIN family. Component of the PI(3,5)P2 regulatory complex at least composed of ATG18, SAC/FIG4, FAB1 and VAC14. As to expression, expressed in roots, flowers and leaves.

The protein localises to the preautophagosomal structure membrane. It is found in the vacuole membrane. Functionally, the PI(3,5)P2 regulatory complex regulates both the synthesis and turnover of phosphatidylinositol 3,5-bisphosphate (PtdIns(3,5)P2). Required for autophagy. In Arabidopsis thaliana (Mouse-ear cress), this protein is Autophagy-related protein 18h (ATG18H).